A 595-amino-acid chain; its full sequence is MHEYRTHDCGALRAADAGITARLSGWVNVKRDHGGLLFIDLRDHYGITQCVFPAGSPVFAAAEALRAESVITVTGRVVKRDADTVNPRLPTGEIELVAETVEVQSTADVLPIQVAGEAQFPEELRLRYRFLDLRREKLHRNIMLRANVIAWLRREMTARGFTEFTTPILTASSPEGARDFLVPSRVHPGQFYALPQAPQQFKQLLMVAGFDRYFQIAPCFRDEASRADRAPGEFYQLDFEMSFVTQEDVFATIEPVLGGLFREFGGGRGVTQWPFPRIAYDEALLKYGSDKPDLRNPLLITDVTEAFRDSGFGLFAKIVAGGGVVRAIPAPGTGGNPRSFFDKLNDWARSEGAGGLGYIIFAPDGAKGPIAKNLEPARAEAIREATGASVGDAVFFAAGKPLEAAKFAGTVRTKLGTDLGLIDGAKFEFCWIVDFPMYERDEETGQIVFSHNPFSMPQGGLEALNGQDPLTIKAFQYDIVCNGVELSSGAIRNHRPDIMLRAFEIAGYGAEEVEARFGGMLNAFRYGAPPHGGSAPGVDRMVMLLADEPNLREVIAFPLNQQGQDLLMGAPAPVPAARLKELSLAIALPPAPKKG.

Position 175 (Glu175) interacts with L-aspartate. Residues 199–202 form an aspartate region; it reads QQFK. 2 residues coordinate L-aspartate: Arg221 and His451. 221 to 223 contacts ATP; sequence RDE. Position 485 (Glu485) interacts with ATP. Arg492 serves as a coordination point for L-aspartate. 537-540 contributes to the ATP binding site; the sequence is GVDR.

This sequence belongs to the class-II aminoacyl-tRNA synthetase family. Type 1 subfamily. In terms of assembly, homodimer.

It is found in the cytoplasm. The enzyme catalyses tRNA(Asx) + L-aspartate + ATP = L-aspartyl-tRNA(Asx) + AMP + diphosphate. Functionally, aspartyl-tRNA synthetase with relaxed tRNA specificity since it is able to aspartylate not only its cognate tRNA(Asp) but also tRNA(Asn). Reaction proceeds in two steps: L-aspartate is first activated by ATP to form Asp-AMP and then transferred to the acceptor end of tRNA(Asp/Asn). The protein is Aspartate--tRNA(Asp/Asn) ligase of Acidiphilium cryptum (strain JF-5).